The following is a 1386-amino-acid chain: DNA-directed RNA polymerase subunit beta'' (1386 aa).

The Zn(2+) site is built by Cys220, Cys289, Cys296, and Cys299.

This sequence belongs to the RNA polymerase beta' chain family. RpoC2 subfamily. As to quaternary structure, in plastids the minimal PEP RNA polymerase catalytic core is composed of four subunits: alpha, beta, beta', and beta''. When a (nuclear-encoded) sigma factor is associated with the core the holoenzyme is formed, which can initiate transcription. Zn(2+) is required as a cofactor.

The protein resides in the plastid. The protein localises to the chloroplast. It catalyses the reaction RNA(n) + a ribonucleoside 5'-triphosphate = RNA(n+1) + diphosphate. Functionally, DNA-dependent RNA polymerase catalyzes the transcription of DNA into RNA using the four ribonucleoside triphosphates as substrates. The sequence is that of DNA-directed RNA polymerase subunit beta'' from Marchantia polymorpha (Common liverwort).